The following is a 120-amino-acid chain: U15-barytoxin-Tl1c (120 aa).

Residues 1 to 16 (MKLFMVLVASFAFAVA) form the signal peptide. 4 disulfide bridges follow: cysteine 55-cysteine 73, cysteine 66-cysteine 79, cysteine 70-cysteine 118, and cysteine 72-cysteine 89.

Belongs to the neurotoxin 03 (Tx2) family. 03 subfamily. As to expression, expressed by the venom gland.

The protein localises to the secreted. In terms of biological role, ion channel inhibitor. In Trittame loki (Brush-footed trapdoor spider), this protein is U15-barytoxin-Tl1c.